The following is a 350-amino-acid chain: C-X-C chemokine receptor type 1 (350 aa).

Residues 1–39 are Extracellular-facing; it reads MSNITDPQMWDFDDLNFTGMPPTDEGYSPCRLETETLNK. Residues Asn-3 and Asn-16 are each glycosylated (N-linked (GlcNAc...) asparagine). The chain crosses the membrane as a helical span at residues 40–66; sequence YVVIITYALVFLLSLLGNSLVMLVILY. Residues 67–75 lie on the Cytoplasmic side of the membrane; sequence SRVGRSVTD. Residues 76-96 form a helical membrane-spanning segment; the sequence is VYLLNLALADLLFALTLPIWA. Topologically, residues 97 to 111 are extracellular; sequence ASKVNGWIFGTFLCK. Cys-110 and Cys-187 are joined by a disulfide. Residues 112–133 traverse the membrane as a helical segment; the sequence is VVSLLKEVNFYSGILLLACISV. Residues 134 to 154 are Cytoplasmic-facing; the sequence is DRYLAIVHATRTLTQKRHLVK. The helical transmembrane segment at 155-174 threads the bilayer; the sequence is FVCLGCWGLSMNLSLPFFLF. Topologically, residues 175–199 are extracellular; that stretch reads RQAYHPNNSSPVCYEVLGNDTAKWR. Residues 200–220 form a helical membrane-spanning segment; that stretch reads MVLRILPHTFGFIVPLFVMLF. At 221-242 the chain is on the cytoplasmic side; the sequence is CYGFTLRTLFKAHMGQKHRAMR. A helical transmembrane segment spans residues 243–264; it reads VIFAVVLIFLLCWLPYNLVLLA. Residues 265–285 are Extracellular-facing; sequence DTLMRTQVIQESCERRNNIGR. A helical transmembrane segment spans residues 286–308; the sequence is ALDATEILGFLHSCLNPIIYAFI. The Cytoplasmic segment spans residues 309–350; the sequence is GQNFRHGFLKILAMHGLVSKEFLARHRVTSYTSSSVNVSSNL.

This sequence belongs to the G-protein coupled receptor 1 family. Interacts with IL8. Interacts with GNAI2.

The protein resides in the cell membrane. Functionally, receptor to interleukin-8, which is a powerful neutrophils chemotactic factor. Binding of IL-8 to the receptor causes activation of neutrophils. This response is mediated via a G-protein that activates a phosphatidylinositol-calcium second messenger system. The protein is C-X-C chemokine receptor type 1 (CXCR1) of Pan troglodytes (Chimpanzee).